A 65-amino-acid chain; its full sequence is MLSIRVDEHKPFDISLRNFKRACEKAGIKQELRDRQHYVKPTEKRKIAKRQAVKRARISQRRAFI.

It belongs to the bacterial ribosomal protein bS21 family.

This is Small ribosomal subunit protein bS21A from Francisella tularensis subsp. holarctica (strain LVS).